Reading from the N-terminus, the 156-residue chain is 6,7-dimethyl-8-ribityllumazine synthase (156 aa).

5-amino-6-(D-ribitylamino)uracil is bound by residues F23, 57–59 (AYE), and 81–83 (AII). A (2S)-2-hydroxy-3-oxobutyl phosphate-binding site is contributed by 86–87 (GT). The active-site Proton donor is H89. Residue F114 coordinates 5-amino-6-(D-ribitylamino)uracil. R128 lines the (2S)-2-hydroxy-3-oxobutyl phosphate pocket.

It belongs to the DMRL synthase family.

It catalyses the reaction (2S)-2-hydroxy-3-oxobutyl phosphate + 5-amino-6-(D-ribitylamino)uracil = 6,7-dimethyl-8-(1-D-ribityl)lumazine + phosphate + 2 H2O + H(+). The protein operates within cofactor biosynthesis; riboflavin biosynthesis; riboflavin from 2-hydroxy-3-oxobutyl phosphate and 5-amino-6-(D-ribitylamino)uracil: step 1/2. Its function is as follows. Catalyzes the formation of 6,7-dimethyl-8-ribityllumazine by condensation of 5-amino-6-(D-ribitylamino)uracil with 3,4-dihydroxy-2-butanone 4-phosphate. This is the penultimate step in the biosynthesis of riboflavin. The sequence is that of 6,7-dimethyl-8-ribityllumazine synthase from Helicobacter pylori (strain G27).